A 217-amino-acid chain; its full sequence is Octanoyltransferase (217 aa).

Residues 31-206 (KSVMDEAWLL…ELVSRLGYAE (176 aa)) form the BPL/LPL catalytic domain. Substrate-binding positions include 70–77 (RGGQVTYH), 137–139 (SLG), and 150–152 (GLA). Cys-168 functions as the Acyl-thioester intermediate in the catalytic mechanism.

This sequence belongs to the LipB family.

Its subcellular location is the cytoplasm. It catalyses the reaction octanoyl-[ACP] + L-lysyl-[protein] = N(6)-octanoyl-L-lysyl-[protein] + holo-[ACP] + H(+). Its pathway is protein modification; protein lipoylation via endogenous pathway; protein N(6)-(lipoyl)lysine from octanoyl-[acyl-carrier-protein]: step 1/2. Its function is as follows. Catalyzes the transfer of endogenously produced octanoic acid from octanoyl-acyl-carrier-protein onto the lipoyl domains of lipoate-dependent enzymes. Lipoyl-ACP can also act as a substrate although octanoyl-ACP is likely to be the physiological substrate. This Pseudomonas aeruginosa (strain UCBPP-PA14) protein is Octanoyltransferase.